Reading from the N-terminus, the 163-residue chain is Urease accessory protein UreE (163 aa).

The segment at 134-163 (EAGAYGGGHRHHHDDDAPSIRQPARLRIHE) is disordered.

Belongs to the UreE family.

Its subcellular location is the cytoplasm. Involved in urease metallocenter assembly. Binds nickel. Probably functions as a nickel donor during metallocenter assembly. This chain is Urease accessory protein UreE, found in Methylobacillus flagellatus (strain ATCC 51484 / DSM 6875 / VKM B-1610 / KT).